We begin with the raw amino-acid sequence, 435 residues long: MPMDIIKGNLDGISKPASSSRSRPGSRSSNGSLEVLTPEPGSVKIDMVNKLNSGQEGHTSNSGVEERRNSNDAKWADDSKTKPAKESSDEDPDMPQPQATPEHSDDPKLEETNAVLQNAIRKMHRLDKLLAKKQCREKEVKKQGLEMRVKLWEELKSAKNTEDLENDEELGNTKKFLCLTSESAGKAAAEALHCEFEDALFSVFHTQIPPETYENLMEKDFTCDVEKNEPLIITEKQPFSNTEAIEPRSEDSQGFIRQNAEHSQDFIKRNIELAKHSRSPVVMVEGEKKRLDELLQGLDDADSGLSSAEGDQCGWLVPGEGYTLAATESQQLAEIDIKLQELSVDSPTIFSLESQSHKGDMECDANEERNTEPTPGEKILRDRKEQRDRESRLRAIDGKLKELSEQVEECPMITPSKRNERITWRWLLAKILEPE.

Disordered stretches follow at residues 1–109 (MPMD…DPKL) and 354–393 (SQSH…ESRL). The segment covering 18 to 32 (SSSRSRPGSRSSNGS) has biased composition (low complexity). The segment covering 50–63 (KLNSGQEGHTSNSG) has biased composition (polar residues). Residues 64 to 87 (VEERRNSNDAKWADDSKTKPAKES) are compositionally biased toward basic and acidic residues. A phosphoserine mark is found at S87 and S88. A coiled-coil region spans residues 108–154 (KLEETNAVLQNAIRKMHRLDKLLAKKQCREKEVKKQGLEMRVKLWEE). Composition is skewed to basic and acidic residues over residues 355–371 (QSHK…ERNT) and 378–393 (KILR…ESRL).

Belongs to the FSIP1 family. As to quaternary structure, may interact with AKAP4. As to expression, detected in male germ cells and testis.

The polypeptide is Fibrous sheath-interacting protein 1 (Fsip1) (Mus musculus (Mouse)).